Here is a 253-residue protein sequence, read N- to C-terminus: Putative enoyl-CoA hydratase (253 aa).

The active site involves E131.

Belongs to the enoyl-CoA hydratase/isomerase family. In terms of assembly, homohexamer; dimer of trimers.

It catalyses the reaction a (3S)-3-hydroxyacyl-CoA = a (2E)-enoyl-CoA + H2O. In Thermus thermophilus (strain ATCC 27634 / DSM 579 / HB8), this protein is Putative enoyl-CoA hydratase.